The chain runs to 432 residues: Glutamate-1-semialdehyde 2,1-aminomutase (432 aa).

K272 carries the post-translational modification N6-(pyridoxal phosphate)lysine.

The protein belongs to the class-III pyridoxal-phosphate-dependent aminotransferase family. HemL subfamily. In terms of assembly, homodimer. Requires pyridoxal 5'-phosphate as cofactor.

It localises to the cytoplasm. The enzyme catalyses (S)-4-amino-5-oxopentanoate = 5-aminolevulinate. Its pathway is porphyrin-containing compound metabolism; protoporphyrin-IX biosynthesis; 5-aminolevulinate from L-glutamyl-tRNA(Glu): step 2/2. The protein operates within porphyrin-containing compound metabolism; chlorophyll biosynthesis. The polypeptide is Glutamate-1-semialdehyde 2,1-aminomutase (Trichormus variabilis (strain ATCC 29413 / PCC 7937) (Anabaena variabilis)).